The following is a 159-amino-acid chain: Small ribosomal subunit protein uS17y (159 aa).

This sequence belongs to the universal ribosomal protein uS17 family.

The protein localises to the cytoplasm. This is Small ribosomal subunit protein uS17y (RPS11B) from Arabidopsis thaliana (Mouse-ear cress).